A 1988-amino-acid chain; its full sequence is Sodium channel protein type 9 subunit alpha (1988 aa).

Residues 1 to 125 (MAMLPPPGPQ…RRISIKILVH (125 aa)) are Cytoplasmic-facing. Residues 26 to 39 (RIAERKSKEPKEEK) are compositionally biased toward basic and acidic residues. A disordered region spans residues 26–55 (RIAERKSKEPKEEKKDDDEEAPKPSSDLEA). One copy of the I repeat lies at 112–410 (FSPLRRISIK…VAMAYEEQNQ (299 aa)). Residues 126 to 145 (SLFSMLIMCTILTNCIFMTM) traverse the membrane as a helical segment. Over 146–150 (NNPPD) the chain is Extracellular. The chain crosses the membrane as a helical span at residues 151 to 172 (WTKNVEYTFTGIYTFESLVKIL). The Cytoplasmic portion of the chain corresponds to 173–185 (ARGFCVGEFTFLR). A helical membrane pass occupies residues 186–204 (DPWNWLDFVVIVFAYLTEF). At 205–210 (VNLGNV) the chain is on the extracellular side. N-linked (GlcNAc...) asparagine glycosylation is present at N209. Residues 211 to 227 (SALRTFRVLRALKTISV) traverse the membrane as a helical segment. At 228–241 (IPGLKTIVGALIQS) the chain is on the cytoplasmic side. The chain crosses the membrane as a helical span at residues 242–267 (VKKLSDVMILTVFCLSVFALIGLQLF). Residues 268-346 (MGNLKHKCFR…PDYGYTSFDT (79 aa)) are Extracellular-facing. A disulfide bond links C275 and C324. N283 carries N-linked (GlcNAc...) asparagine glycosylation. Residues 347-363 (FSWAFLALFRLMTQDYW) constitute an intramembrane region (pore-forming). Residues 364 to 376 (ENLYQQTLRAAGK) are Extracellular-facing. A helical transmembrane segment spans residues 377–402 (TYMIFFVVVIFLGSFYLINLILAVVA). The Cytoplasmic segment spans residues 403 to 745 (MAYEEQNQAN…CIYFIVMDPF (343 aa)). The segment covering 461–471 (SSSETSKLSSK) has biased composition (low complexity). Disordered regions lie at residues 461–543 (SSSE…RGSL) and 565–611 (GSET…SPPM). Residues 474-486 (KERRNRRKKKNQK) show a composition bias toward basic residues. Basic and acidic residues-rich tracts occupy residues 489-510 (SSGE…DSIR) and 573-585 (DEHS…ESRR). The stretch at 726-989 (CSPYWIKFKK…EEDPDANNLQ (264 aa)) is one II repeat. A helical transmembrane segment spans residues 746-762 (VDLAITICIVLNTLFMA). Residues 763 to 771 (MEHHPMTEE) are Extracellular-facing. The chain crosses the membrane as a helical span at residues 772–796 (FKNVLAIGNLVFTGIFAAEMVLKLI). The Cytoplasmic portion of the chain corresponds to 797–805 (AMDPYEYFQ). The helical transmembrane segment at 806–822 (VGWNIFDSLIVTLSLVE) threads the bilayer. Topologically, residues 823–831 (LFLADVEGL) are extracellular. Residues 832 to 848 (SVLRSFRLLRVFKLAKS) traverse the membrane as a helical segment. The Cytoplasmic segment spans residues 849–865 (WPTLNMLIKIIGNSVGA). Residues 866–888 (LGNLTLVLAIIVFIFAVVGMQLF) traverse the membrane as a helical segment. The Extracellular portion of the chain corresponds to 889 to 915 (GKSYKECVCKINDDCTLPRWHMNDFFH). C897 and C903 are joined by a disulfide. The segment at residues 916-928 (SFLIVFRVLCGEW) is an intramembrane region (pore-forming). Residues 929-940 (IETMWDCMEVAG) lie on the Extracellular side of the membrane. Cysteines 935 and 944 form a disulfide. A helical membrane pass occupies residues 941-967 (QAMCLIVYMMVMVIGNLVVLNLFLALL). Topologically, residues 968 to 1187 (LSSFSSDNLT…WWNIRKTCYK (220 aa)) are cytoplasmic. Residues 1102–1148 (NAEELSSDSDSEYSKVRLNRSSSSECSTVDNPLPGEGEEAEAEPMNS) are disordered. The segment covering 1120-1131 (NRSSSSECSTVD) has biased composition (polar residues). Over residues 1137–1148 (EGEEAEAEPMNS) the composition is skewed to acidic residues. The stretch at 1180-1488 (NIRKTCYKIV…KKYYNAMKKL (309 aa)) is one III repeat. Residues 1188–1212 (IVEHSWFESFIVLMILLSSGALAFE) form a helical membrane-spanning segment. Topologically, residues 1213 to 1224 (DIYIERKKTIKI) are extracellular. Residues 1225–1250 (ILEYADKIFTYIFILEMLLKWIAYGY) form a helical membrane-spanning segment. Residues 1251–1252 (KT) are Cytoplasmic-facing. Residues 1253–1278 (YFTNAWCWLDFLIVDVSLVTLVANTL) traverse the membrane as a helical segment. Over 1279 to 1287 (GYSDLGPIK) the chain is Extracellular. A helical membrane pass occupies residues 1288–1304 (SLRTLRALRPLRALSRF). Over 1305-1317 (EGMRVVVNALIGA) the chain is Cytoplasmic. Residues 1318-1342 (IPSIMNVLLVCLIFWLIFSIMGVNL) traverse the membrane as a helical segment. At 1343-1394 (FAGKFYECINTTDGSRFPASQVPNRSECFALMNVSQNVRWKNLKVNFDNVGL) the chain is on the extracellular side. A disulfide bridge links C1350 with C1370. Residues N1352, N1366, and N1375 are each glycosylated (N-linked (GlcNAc...) asparagine). Residues 1395–1405 (GYLSLLQVATF) constitute an intramembrane region (pore-forming). Residues 1406-1431 (KGWTIIMYAAVDSVNVDKQPKYEYSL) are Extracellular-facing. Residues 1432–1457 (YMYIYFVVFIIFGSFFTLNLFIGVII) form a helical membrane-spanning segment. Residues 1458 to 1514 (DNFNQQKKKLGGQDIFMTEEQKKYYNAMKKLGSKKPQKPIPRPGNKIQGCIFDLVTN) are Cytoplasmic-facing. S1490 bears the Phosphoserine; by PKC mark. The stretch at 1497 to 1795 (IPRPGNKIQG…WEKFDPDATQ (299 aa)) is one IV repeat. The helical transmembrane segment at 1515 to 1534 (QAFDISIMVLICLNMVTMMV) threads the bilayer. Topologically, residues 1535 to 1545 (EKEGQSQHMTE) are extracellular. Residues 1546–1567 (VLYWINVVFIILFTGECVLKLI) form a helical membrane-spanning segment. The Cytoplasmic segment spans residues 1568-1576 (SLRHYYFTV). The chain crosses the membrane as a helical span at residues 1577–1598 (GWNIFDFVVVIISIVGMFLADL). Residues 1599–1607 (IETYFVSPT) are Extracellular-facing. A helical transmembrane segment spans residues 1608 to 1627 (LFRVIRLARIGRILRLVKGA). The Cytoplasmic portion of the chain corresponds to 1628–1640 (KGIRTLLFALMMS). A helical membrane pass occupies residues 1641–1663 (LPALFNIGLLLFLVMFIYAIFGM). Topologically, residues 1664–1686 (SNFAYVKKEDGINDMFNFETFGN) are extracellular. Positions 1687-1699 (SMICLFQITTSAG) form an intramembrane region, pore-forming. Residues 1700–1733 (WDGLLAPILNSKPPDCDPKKVHPGSSVEGDCGNP) lie on the Extracellular side of the membrane. C1715 and C1730 are oxidised to a cystine. A helical transmembrane segment spans residues 1734–1759 (SVGIFYFVSYIIISFLVVVNMYIAVI). The Cytoplasmic segment spans residues 1760-1988 (LENFSVATEE…KGKDSKESKK (229 aa)). In terms of domain architecture, IQ spans 1889–1918 (EDVSATVIQRAYRRYRLRQNVKNISSIYIK). The tract at residues 1934–1988 (FDNVNENSSPEKTDATSSTTSPPSYDSVTKPDKEKYEQDRTEKEDKGKDSKESKK) is disordered. Residues 1948 to 1961 (ATSSTTSPPSYDSV) show a composition bias toward low complexity. Over residues 1962 to 1988 (TKPDKEKYEQDRTEKEDKGKDSKESKK) the composition is skewed to basic and acidic residues.

The protein belongs to the sodium channel (TC 1.A.1.10) family. Nav1.7/SCN9A subfamily. As to quaternary structure, the Nav1.7 voltage-gated sodium channel consists of an ion-conducting alpha subunit SCN9A which is functional on its own regulated by one or more beta-1 (SCN1B), beta-2 (SCN2B), beta-3 (SCN3B) and beta-4 (SCN4B) subunits. SCN1B and SCN3B are non-covalently associated with SCN9A. SCN2B and SCN4B are disulfide-linked to SCN9A. SCN1B regulates channel inactivation. Interacts with NEDD4 and NEDD4L; regulates Nav1.7 activity most probably through ubiquitination and subsequent endocytosis. Interacts with TMEM233; modulates the gating properties of NaV1.7. In terms of processing, phosphorylation at Ser-1490 by PKC in a highly conserved cytoplasmic loop increases peak sodium currents. Ubiquitinated by NEDD4L; which may promote its endocytosis. In terms of tissue distribution, expressed strongly in dorsal root ganglion, with only minor levels elsewhere in the body, smooth muscle cells, MTC cell line and C-cell carcinoma. Also expressed in vagus nerves within the head and neck region. Isoform 1 is expressed preferentially in the central and peripheral nervous system. Isoform 2 is expressed preferentially in the dorsal root ganglion.

The protein localises to the cell membrane. It localises to the cell projection. Its subcellular location is the neuron projection. It is found in the axon. It catalyses the reaction Na(+)(in) = Na(+)(out). Its activity is regulated as follows. Inhibited by tetrodotoxin. Weakly inhibited by saxitoxin. Inhibited by the spider huwentoxin-IV that binds the extracellular loop S3-S4 of repeat II. Inhibited by the spider protoxin-II that binds the extracellular loop S3-S4 of repeats II and IV. Inhibited by the scorpion alpha-toxins CvIV4 and AaH2. Inhibited by the conotoxin GVIIJ. Inhibited by the spider beta/delta-theraphotoxin-Pre1a. Its function is as follows. Pore-forming subunit of Nav1.7, a voltage-gated sodium (Nav) channel that directly mediates the depolarizing phase of action potentials in excitable membranes. Navs, also called VGSCs (voltage-gated sodium channels) or VDSCs (voltage-dependent sodium channels), operate by switching between closed and open conformations depending on the voltage difference across the membrane. In the open conformation they allow Na(+) ions to selectively pass through the pore, along their electrochemical gradient. The influx of Na(+) ions provokes membrane depolarization, initiating the propagation of electrical signals throughout cells and tissues. Nav1.7 plays a crucial role in controlling the excitability and action potential propagation from nociceptor neurons, thereby contributing to the sensory perception of pain. This is Sodium channel protein type 9 subunit alpha from Homo sapiens (Human).